Reading from the N-terminus, the 330-residue chain is UDP-glucose 4-epimerase (330 aa).

NAD(+) is bound by residues 11–12 (YI), 31–36 (DALYTG), 51–52 (DI), 73–77 (FAAYS), Asn-92, Ser-117, Tyr-141, Lys-145, and Phe-169. Ser-117 and Tyr-141 together coordinate substrate. Tyr-141 (proton acceptor) is an active-site residue. Substrate contacts are provided by residues Asn-170, 189–190 (HL), 206–208 (TIF), Arg-221, and 282–285 (RGGD).

It belongs to the NAD(P)-dependent epimerase/dehydratase family. Homodimer. Requires NAD(+) as cofactor.

It carries out the reaction UDP-alpha-D-glucose = UDP-alpha-D-galactose. The protein operates within carbohydrate metabolism; galactose metabolism. Involved in the metabolism of galactose. Catalyzes the conversion of UDP-galactose (UDP-Gal) to UDP-glucose (UDP-Glc) through a mechanism involving the transient reduction of NAD. It also could be involved in preparation of carbohydrate residues for incorporation into complex polymers, such as exopolysaccharides. The protein is UDP-glucose 4-epimerase (galE) of Lactobacillus helveticus (Lactobacillus suntoryeus).